The sequence spans 491 residues: UDP-N-acetylmuramate--L-alanine ligase (491 aa).

126-132 (GTHGKTT) contributes to the ATP binding site.

It belongs to the MurCDEF family.

It localises to the cytoplasm. The catalysed reaction is UDP-N-acetyl-alpha-D-muramate + L-alanine + ATP = UDP-N-acetyl-alpha-D-muramoyl-L-alanine + ADP + phosphate + H(+). Its pathway is cell wall biogenesis; peptidoglycan biosynthesis. In terms of biological role, cell wall formation. This Klebsiella pneumoniae subsp. pneumoniae (strain ATCC 700721 / MGH 78578) protein is UDP-N-acetylmuramate--L-alanine ligase.